We begin with the raw amino-acid sequence, 682 residues long: Glutamine--fructose-6-phosphate aminotransferase [isomerizing] 2 (682 aa).

Catalysis depends on Cys2, which acts as the For GATase activity. Residues 2 to 288 (CGIFAYMNYR…DDDIAAVADG (287 aa)) form the Glutamine amidotransferase type-2 domain. At Ser244 the chain carries Phosphoserine. SIS domains follow at residues 360-499 (HLKE…DRIS) and 531-672 (LALE…VDFP). Residues 377 to 378 (TS), 422 to 424 (SQS), Thr427, and His578 contribute to the substrate site.

The enzyme catalyses D-fructose 6-phosphate + L-glutamine = D-glucosamine 6-phosphate + L-glutamate. It participates in nucleotide-sugar biosynthesis; UDP-N-acetyl-alpha-D-glucosamine biosynthesis; alpha-D-glucosamine 6-phosphate from D-fructose 6-phosphate: step 1/1. In terms of biological role, controls the flux of glucose into the hexosamine pathway. Most likely involved in regulating the availability of precursors for N- and O-linked glycosylation of proteins. The polypeptide is Glutamine--fructose-6-phosphate aminotransferase [isomerizing] 2 (GFPT2) (Bos taurus (Bovine)).